We begin with the raw amino-acid sequence, 477 residues long: NADH-quinone oxidoreductase subunit N (477 aa).

A run of 13 helical transmembrane segments spans residues 7-27 (VLAHALPELILAGGVLLLILI), 37-57 (GPMTELAVGLLGIAILTLVLG), 77-97 (FMKVLVLIGSLVSLIMGQTYL), 109-129 (ILILLSTLGMLMLISATGLIA), 162-182 (FVLGALSSGMLLYGASLIYGF), 201-221 (LGVVFGLVFLTAGLAFKMSTV), 233-253 (GAPTPVTAFFASAPKLAAIAI), 272-292 (IIVFISILSMALGSFAAIGQT), 297-317 (LMAYSSIGHMGFALVGLAAGT), 323-343 (GVLAYMAIYLVMTLGTFAAIL), 369-389 (AFFLAIMMFSLAGIPPLAGFF), 402-424 (HLYPLAVIGVLCSTVGAYYYLRI), and 446-466 (AVLIVTGLAVLLLCVYPGSFV).

The protein belongs to the complex I subunit 2 family. In terms of assembly, NDH-1 is composed of 14 different subunits. Subunits NuoA, H, J, K, L, M, N constitute the membrane sector of the complex.

It is found in the cell inner membrane. The catalysed reaction is a quinone + NADH + 5 H(+)(in) = a quinol + NAD(+) + 4 H(+)(out). In terms of biological role, NDH-1 shuttles electrons from NADH, via FMN and iron-sulfur (Fe-S) centers, to quinones in the respiratory chain. The immediate electron acceptor for the enzyme in this species is believed to be ubiquinone. Couples the redox reaction to proton translocation (for every two electrons transferred, four hydrogen ions are translocated across the cytoplasmic membrane), and thus conserves the redox energy in a proton gradient. This chain is NADH-quinone oxidoreductase subunit N, found in Beijerinckia indica subsp. indica (strain ATCC 9039 / DSM 1715 / NCIMB 8712).